We begin with the raw amino-acid sequence, 1045 residues long: Suppression of tumorigenicity 18 protein (1045 aa).

Disordered stretches follow at residues 38–90 (KKRR…NDHA), 158–228 (KAES…YNRK), and 340–364 (PRVTDANGRQIFTNKHSPRPERREA). Residues 52–63 (NKRKSLLMKPRH) are compositionally biased toward basic residues. Composition is skewed to basic and acidic residues over residues 69 to 90 (GCKESPDNRNEDDGLLETNDHA) and 159 to 177 (AESDEAHEGSMVHSDNGRD). 6 CCHHC-type zinc fingers span residues 357–400 (PRPE…PLEI), 401–444 (LAMH…KLAM), 713–756 (RDLK…LKSL), 757–800 (MAAN…GIKM), 805–848 (EEKE…QKEN), and 858–901 (KLNK…IKKV). Residues C366, C371, H384, C390, C410, C415, H428, C434, C722, C727, H740, C746, C766, C771, H784, C790, C814, C819, H832, C838, C867, C872, H885, and C891 each contribute to the Zn(2+) site. A coiled-coil region spans residues 918–987 (IDGDEEIRHL…KELAGLSQAL (70 aa)).

It belongs to the MYT1 family.

Its subcellular location is the nucleus. Functionally, repressor that binds to DNA sequences containing a bipartite element consisting of a direct repeat of the sequence 5'-AAAGTTT-3' separated by 2-9 nucleotides. Represses basal transcription activity from target promoters. The sequence is that of Suppression of tumorigenicity 18 protein (St18) from Mus musculus (Mouse).